The primary structure comprises 317 residues: MGYDVSRFQGDVDEDLICPICSGVLEEPVQAPHCEHAFCNACITQWFSQQQTCPVDRSVVTVAHLRPVPRIMRNMLSKLQITCDNAVFGCTTIVRLDNLMSHLSDCEHNPKRPVTCEQGCGLEMPKDEVPNHNCIKHLRSVVQQQQIRIGELEKTAAESKHQLSEQKRDIQLLKAYMRAIRSANPNLQNLEETIEYNEILEWVNSLQPARVTRWGGMISTPDAVLQAVIKRSLVESGCPASIVNEIIENAHERNWPQGLATLETRQMNRRYYENYVAKRIPGKQAVVVMACENQHMGEDMVLEPGLVMIFAHGVEEI.

The segment at 18–57 adopts an RING-type; degenerate zinc-finger fold; it reads CPICSGVLEEPVQAPHCEHAFCNACITQWFSQQQTCPVDR. A coiled-coil region spans residues 135-175; the sequence is IKHLRSVVQQQQIRIGELEKTAAESKHQLSEQKRDIQLLKA.

The enzyme catalyses S-ubiquitinyl-[E2 ubiquitin-conjugating enzyme]-L-cysteine + [acceptor protein]-L-lysine = [E2 ubiquitin-conjugating enzyme]-L-cysteine + N(6)-ubiquitinyl-[acceptor protein]-L-lysine.. It functions in the pathway protein modification; protein ubiquitination. In terms of biological role, acts as E3 ubiquitin-protein ligase and regulates the degradation of target proteins. In Xenopus laevis (African clawed frog), this protein is E3 ubiquitin-protein ligase NRDP1 (rnf41).